Here is a 599-residue protein sequence, read N- to C-terminus: Beta-(1--&gt;2)glucan export ATP-binding/permease protein NdvA (599 aa).

The ABC transmembrane type-1 domain maps to 21–311 (GWILAVANLL…VVNFINNVLM (291 aa)). 6 helical membrane-spanning segments follow: residues 22-42 (WILAVANLLLATAQFAEPILF), 68-88 (LLGAWVGFGLFTIMCSALVAL), 146-166 (EHFAAILSLVVLLPLSLYINW), 168-188 (LAILLFVLCIVFTVLTTLVVH), 254-274 (VITRASTTITVLSIFALGIYL), and 276-296 (QQGLTSVGEIVMFVSFATLLI). One can recognise an ABC transporter domain in the interval 345 to 579 (VEFQNVSFSY…GGAFAQLARA (235 aa)). Residue 378-385 (GATGAGKS) coordinates ATP.

Belongs to the ABC transporter superfamily. Beta-(1--&gt;2)glucan exporter (TC 3.A.1.108.1) family. Homodimer.

It is found in the cell inner membrane. It catalyses the reaction [(1-&gt;2)-beta-D-glucosyl](n)(in) + ATP + H2O = [(1-&gt;2)-beta-D-glucosyl](n)(out) + ADP + phosphate + H(+). Functionally, involved in beta-(1--&gt;2)glucan export. Transmembrane domains (TMD) form a pore in the inner membrane and the ATP-binding domain (NBD) is responsible for energy generation. This chain is Beta-(1--&gt;2)glucan export ATP-binding/permease protein NdvA, found in Rhodopseudomonas palustris (strain ATCC BAA-98 / CGA009).